Reading from the N-terminus, the 202-residue chain is Orotate phosphoribosyltransferase (202 aa).

5-phospho-alpha-D-ribose 1-diphosphate is bound by residues lysine 93 and 113–121 (EDIITTGGS). Positions 117 and 145 each coordinate orotate.

The protein belongs to the purine/pyrimidine phosphoribosyltransferase family. PyrE subfamily. As to quaternary structure, homodimer. Mg(2+) is required as a cofactor.

It catalyses the reaction orotidine 5'-phosphate + diphosphate = orotate + 5-phospho-alpha-D-ribose 1-diphosphate. The protein operates within pyrimidine metabolism; UMP biosynthesis via de novo pathway; UMP from orotate: step 1/2. Catalyzes the transfer of a ribosyl phosphate group from 5-phosphoribose 1-diphosphate to orotate, leading to the formation of orotidine monophosphate (OMP). The polypeptide is Orotate phosphoribosyltransferase (Campylobacter jejuni subsp. jejuni serotype O:2 (strain ATCC 700819 / NCTC 11168)).